A 330-amino-acid chain; its full sequence is Virulence plasmid integrase pGP8-D (330 aa).

Residues 39 to 124 form the Core-binding (CB) domain; sequence FSLFEVIMHW…SYISLTRFLN (86 aa). Residues 152–327 form the Tyr recombinase domain; that stretch reads VKTNAMNRLQ…SREDNASKKM (176 aa). Residues R189, K214, H279, R282, and H305 contribute to the active site. The O-(3'-phospho-DNA)-tyrosine intermediate role is filled by Y314.

Belongs to the 'phage' integrase family.

This Chlamydia muridarum (strain MoPn / Nigg) protein is Virulence plasmid integrase pGP8-D.